Reading from the N-terminus, the 257-residue chain is Phosphonates import ATP-binding protein PhnC (257 aa).

The ABC transporter domain maps to 2-246 (IEFRNVSKVY…KFAEIYGDVA (245 aa)). 35 to 42 (GLSGAGKS) is an ATP binding site.

This sequence belongs to the ABC transporter superfamily. Phosphonates importer (TC 3.A.1.9.1) family. In terms of assembly, the complex is composed of two ATP-binding proteins (PhnC), two transmembrane proteins (PhnE) and a solute-binding protein (PhnD).

Its subcellular location is the cell membrane. It catalyses the reaction phosphonate(out) + ATP + H2O = phosphonate(in) + ADP + phosphate + H(+). Functionally, part of the ABC transporter complex PhnCDE involved in phosphonates import. Responsible for energy coupling to the transport system. This Bacillus cereus (strain ATCC 10987 / NRS 248) protein is Phosphonates import ATP-binding protein PhnC.